Here is a 237-residue protein sequence, read N- to C-terminus: Demethylmenaquinone methyltransferase (237 aa).

S-adenosyl-L-methionine is bound by residues threonine 58, aspartate 79, and 106–107 (NA).

This sequence belongs to the class I-like SAM-binding methyltransferase superfamily. MenG/UbiE family.

The enzyme catalyses a 2-demethylmenaquinol + S-adenosyl-L-methionine = a menaquinol + S-adenosyl-L-homocysteine + H(+). Its pathway is quinol/quinone metabolism; menaquinone biosynthesis; menaquinol from 1,4-dihydroxy-2-naphthoate: step 2/2. In terms of biological role, methyltransferase required for the conversion of demethylmenaquinol (DMKH2) to menaquinol (MKH2). The polypeptide is Demethylmenaquinone methyltransferase (Bacillus cereus (strain B4264)).